A 141-amino-acid polypeptide reads, in one-letter code: NADPH-dependent 7-cyano-7-deazaguanine reductase (141 aa).

C56 acts as the Thioimide intermediate in catalysis. The active-site Proton donor is D63. Residues 78 to 80 (VEL) and 97 to 98 (HE) each bind substrate.

This sequence belongs to the GTP cyclohydrolase I family. QueF type 1 subfamily.

The protein resides in the cytoplasm. The catalysed reaction is 7-aminomethyl-7-carbaguanine + 2 NADP(+) = 7-cyano-7-deazaguanine + 2 NADPH + 3 H(+). It participates in tRNA modification; tRNA-queuosine biosynthesis. In terms of biological role, catalyzes the NADPH-dependent reduction of 7-cyano-7-deazaguanine (preQ0) to 7-aminomethyl-7-deazaguanine (preQ1). The chain is NADPH-dependent 7-cyano-7-deazaguanine reductase from Trichodesmium erythraeum (strain IMS101).